A 443-amino-acid chain; its full sequence is ATP-dependent protease ATPase subunit HslU (443 aa).

ATP is bound by residues Ile18, 60-65 (GVGKTE), Asp256, Glu321, and Arg393.

Belongs to the ClpX chaperone family. HslU subfamily. As to quaternary structure, a double ring-shaped homohexamer of HslV is capped on each side by a ring-shaped HslU homohexamer. The assembly of the HslU/HslV complex is dependent on binding of ATP.

The protein localises to the cytoplasm. Functionally, ATPase subunit of a proteasome-like degradation complex; this subunit has chaperone activity. The binding of ATP and its subsequent hydrolysis by HslU are essential for unfolding of protein substrates subsequently hydrolyzed by HslV. HslU recognizes the N-terminal part of its protein substrates and unfolds these before they are guided to HslV for hydrolysis. The chain is ATP-dependent protease ATPase subunit HslU from Yersinia pestis bv. Antiqua (strain Antiqua).